A 244-amino-acid polypeptide reads, in one-letter code: DNA repair protein RecO (244 aa).

The protein belongs to the RecO family.

Involved in DNA repair and RecF pathway recombination. The sequence is that of DNA repair protein RecO from Geobacter metallireducens (strain ATCC 53774 / DSM 7210 / GS-15).